The chain runs to 320 residues: Malate dehydrogenase (320 aa).

Residues 10–15 and Asp34 each bind NAD(+); that span reads GSGMIG. Substrate contacts are provided by Arg83 and Arg89. NAD(+)-binding positions include Asn96 and 119–121; that span reads ITN. Asn121 and Arg152 together coordinate substrate. His176 acts as the Proton acceptor in catalysis.

This sequence belongs to the LDH/MDH superfamily. MDH type 3 family.

The enzyme catalyses (S)-malate + NAD(+) = oxaloacetate + NADH + H(+). Functionally, catalyzes the reversible oxidation of malate to oxaloacetate. In Brucella anthropi (strain ATCC 49188 / DSM 6882 / CCUG 24695 / JCM 21032 / LMG 3331 / NBRC 15819 / NCTC 12168 / Alc 37) (Ochrobactrum anthropi), this protein is Malate dehydrogenase.